The primary structure comprises 360 residues: Magnesium-protoporphyrin IX monomethyl ester [oxidative] cyclase (360 aa).

Belongs to the AcsF family. It depends on Fe cation as a cofactor.

The enzyme catalyses Mg-protoporphyrin IX 13-monomethyl ester + 3 NADPH + 3 O2 + 2 H(+) = 3,8-divinyl protochlorophyllide a + 3 NADP(+) + 5 H2O. It participates in porphyrin-containing compound metabolism; chlorophyll biosynthesis (light-independent). In terms of biological role, catalyzes the formation of the isocyclic ring in chlorophyll biosynthesis. Mediates the cyclase reaction, which results in the formation of divinylprotochlorophyllide (Pchlide) characteristic of all chlorophylls from magnesium-protoporphyrin IX 13-monomethyl ester (MgPMME). This chain is Magnesium-protoporphyrin IX monomethyl ester [oxidative] cyclase, found in Synechococcus sp. (strain WH7803).